The chain runs to 472 residues: 7-dimethylallyltryptophan synthase hasE (472 aa).

Glutamate 138 serves as a coordination point for L-tryptophan. 8 residues coordinate dimethylallyl diphosphate: arginine 154, lysine 239, tyrosine 241, lysine 313, tyrosine 315, tyrosine 393, tyrosine 460, and tyrosine 464.

It belongs to the tryptophan dimethylallyltransferase family. As to quaternary structure, homodimer.

It carries out the reaction L-tryptophan + dimethylallyl diphosphate = 7-(3-methylbut-2-enyl)-L-tryptophan + diphosphate. The enzyme catalyses an N-terminal L-tryptophanyl-L-alpha-aminoacyl-[peptide] + H2O = an N-terminal L-alpha-aminoacyl-[peptide] + L-tryptophan. It functions in the pathway secondary metabolite biosynthesis. In terms of biological role, 7-dimethylallyltryptophan synthase; part of the gene cluster that mediates the biosynthesis of hexadehydro-astechrome (HAS), a tryptophan-derived iron(III)-complex that acts as a virulence factor in infected mice. Catalyzes the prenylation of L-tryptophan at the C-7 position of the indole moiety. The enzyme is specific for dimethylallyl diphosphate (DMAPP) as prenyl donor. Also accepts D-tryptophan, typtophan-derivatives with modifications at the side chain or the indole ring, and linear and cyclic dipeptides such as H-L-Trp-L-Gly-OH or cyclo-L-Trp-L-Gly as substrates, however with lower efficiency. Also has tryptophan aminopeptidase activity towards linear peptides with a tryptophanyl moiety at the N-terminus. Dipeptides are better substrates than peptides with 3 or more amino acids. Enzymatic rate constants however are much higher for the prenyltransferase activity than for the aminopeptidase activity. Within the hexadehydro-astechrome biosyntetic pathway, hasE catalyzes the prenylation of the hasD-tethered tryptophan or the resulting tethered Trp-Ala dipeptid. The HAS biosynthesis begins with the synthesis of a tethered Trp-Ala dipeptide by the NRPS hasD. The 7-dimethylallyltryptophan synthase hasE then catalyzes the prenylation of the hasD-tethered tryptophan or the resulting tethered Trp-Ala dipeptide at the C-7 position of the indole moiety. HAS biosynthesis continues via tethered intermediates with the succesive actions of the cytochrome P450 monooxygenase hasH, the O-methyltransferase hasC, and the FAD-linked oxidoreductase hasG. The resulting O-methylated diketopiperazine is then released from hasD. Finally, three O-methylated diketopiperazine molecules assemble in a trimeric complex with Fe(III) to produce hexadehydro-astechrome. This chain is 7-dimethylallyltryptophan synthase hasE, found in Aspergillus fumigatus (strain CBS 144.89 / FGSC A1163 / CEA10) (Neosartorya fumigata).